The chain runs to 285 residues: NAD kinase (285 aa).

The active-site Proton acceptor is the Asp-67. Residues 67–68, 141–142, Arg-152, Lys-169, Asp-171, 182–187, and Gln-242 contribute to the NAD(+) site; these read DG, ND, and TGYSLS.

Belongs to the NAD kinase family. The cofactor is a divalent metal cation.

The protein resides in the cytoplasm. It carries out the reaction NAD(+) + ATP = ADP + NADP(+) + H(+). In terms of biological role, involved in the regulation of the intracellular balance of NAD and NADP, and is a key enzyme in the biosynthesis of NADP. Catalyzes specifically the phosphorylation on 2'-hydroxyl of the adenosine moiety of NAD to yield NADP. The polypeptide is NAD kinase (Trichlorobacter lovleyi (strain ATCC BAA-1151 / DSM 17278 / SZ) (Geobacter lovleyi)).